The chain runs to 76 residues: Conotoxin ArMLCL-022 (76 aa).

The signal sequence occupies residues 1 to 19; that stretch reads MLCLPVFIILLLLASTAAS. Residues 20-52 constitute a propeptide that is removed on maturation; sequence NPLETRIQSDLIRAALEDADMKTERGFLGVLMK.

Belongs to the conotoxin T superfamily. In terms of tissue distribution, expressed by the venom duct.

It is found in the secreted. In Conus arenatus (Sand-dusted cone), this protein is Conotoxin ArMLCL-022.